Reading from the N-terminus, the 138-residue chain is MKNRIVFLYASWVVALIAMLGSLYFSEIRKFIPCELCWYQRILMYPLVLILGIATFQGDTRVKKYVLPMAIIGAFISIMHYLEQKVPGFSGIKPCVSGVPCSGQYINWFGFITIPFLALIAFILIIIFMCLLKGEKSE.

A helical membrane pass occupies residues I5 to Y24. An intrachain disulfide couples C34 to C37. The next 2 membrane-spanning stretches (helical) occupy residues Y39–G58 and Y65–L82. A disulfide bridge links C95 with C101. Residues G110–L132 traverse the membrane as a helical segment.

The protein belongs to the DsbB family. BdbC subfamily.

Its subcellular location is the cell membrane. It localises to the membrane raft. Required for the stabilization, possibly via formation of a disulfide bond, of the obligatory competence protein ComGC. Not normally required for production of the secreted lantibiotic sublancin 168, although it can partially substitute for BdbB when the latter is absent. It may also be required for the stability of other secreted proteins. Not required for sporulation. The chain is Disulfide bond formation protein C (bdbC) from Bacillus subtilis (strain 168).